Here is a 314-residue protein sequence, read N- to C-terminus: TPR repeat-containing protein MJ1345 (314 aa).

TPR repeat units lie at residues 12-45 (ESILWDEYFDALEKRNYEKALLLIDKILEVRESP), 46-78 (DVYVRKARILRTLGENDKALEYFDKALKLKPKY), 80-112 (LANFLKGALLVSLGKLEEAKEVFLKLCRLEKSD), 114-146 (PVKYVTAFILKKLGEYDYALKIIDKILKKYPKS), 147-180 (AIAWAEKGEILYREGKLKKSLECFDNALKINPKD), 182-214 (QSLLYKGEILFKLGRYGEALKCLKKVFERNNKD), 215-248 (IRALMYIIQILIYLGRLNQALEYTKKALKLNPDD), 249-282 (PLLYLYKGIILNKLGKYNEAIKYFDKVLEINPNI), and 284-313 (DAWNGKAIALEKLGKINEAIECYNRALDIY).

In Methanocaldococcus jannaschii (strain ATCC 43067 / DSM 2661 / JAL-1 / JCM 10045 / NBRC 100440) (Methanococcus jannaschii), this protein is TPR repeat-containing protein MJ1345.